Reading from the N-terminus, the 583-residue chain is Laminarase-resistance protein LRE1 (583 aa).

The span at methionine 1–serine 24 shows a compositional bias: polar residues. 2 disordered regions span residues methionine 1–arginine 31 and leucine 330–histidine 380. Composition is skewed to basic and acidic residues over residues aspartate 332–proline 342 and leucine 354–serine 366. Serine 393 and serine 398 each carry phosphoserine. A disordered region spans residues serine 457 to threonine 486. The span at aspartate 461 to lysine 479 shows a compositional bias: basic and acidic residues. Serine 516 and serine 552 each carry phosphoserine.

Post-translationally, phosphorylated by CDC28/CDK1.

Its function is as follows. Overexpression affects chitinase expression, cell separation and budding pattern, and increases trehalose accumulation and heat resistance by inhibiting protein kinase CBK1. Overexpression also suppresses temperature-induced hyperosmosensitivity and sensitivity to cell wall degrading enzymes. Overexpression of both LRE1 and PBN1 confers resistance to laminarinase. This chain is Laminarase-resistance protein LRE1 (LRE1), found in Saccharomyces cerevisiae (strain ATCC 204508 / S288c) (Baker's yeast).